Consider the following 229-residue polypeptide: 7-cyano-7-deazaguanine synthase (229 aa).

Leucine 15–valine 25 is a binding site for ATP. Zn(2+)-binding residues include cysteine 194, cysteine 204, cysteine 207, and cysteine 210.

The protein belongs to the QueC family. Zn(2+) serves as cofactor.

It catalyses the reaction 7-carboxy-7-deazaguanine + NH4(+) + ATP = 7-cyano-7-deazaguanine + ADP + phosphate + H2O + H(+). It functions in the pathway purine metabolism; 7-cyano-7-deazaguanine biosynthesis. Functionally, catalyzes the ATP-dependent conversion of 7-carboxy-7-deazaguanine (CDG) to 7-cyano-7-deazaguanine (preQ(0)). The protein is 7-cyano-7-deazaguanine synthase of Pseudomonas savastanoi pv. phaseolicola (strain 1448A / Race 6) (Pseudomonas syringae pv. phaseolicola (strain 1448A / Race 6)).